Here is a 265-residue protein sequence, read N- to C-terminus: tRNA (guanine-N(1)-)-methyltransferase (265 aa).

S-adenosyl-L-methionine-binding positions include Gly-119 and 139–144; that span reads VGDYIL.

Belongs to the RNA methyltransferase TrmD family. Homodimer.

The protein resides in the cytoplasm. The enzyme catalyses guanosine(37) in tRNA + S-adenosyl-L-methionine = N(1)-methylguanosine(37) in tRNA + S-adenosyl-L-homocysteine + H(+). In terms of biological role, specifically methylates guanosine-37 in various tRNAs. The polypeptide is tRNA (guanine-N(1)-)-methyltransferase (Pseudoalteromonas atlantica (strain T6c / ATCC BAA-1087)).